We begin with the raw amino-acid sequence, 395 residues long: MKHLSLLALAAVAPTTALAGVIDHQQVTFEKPPTHNQIEKFLIQLGPGESRWVTEEEKWALKLVGFYVLEGMNFFDITAESDQGFSVKSFEQTKVTYPSEIKYQKELAPLSKDLSKGNMRENLVKFTSFHTRYYKSETGVQSATWLLERVQQAIDDSGASKHGVKVEKFNHPWGQFSIIATIPGRSNKTVVVGAHQDSINLFLPSILAAPGADDDGSGTVTILEAFRVLLQSDAIREGKAANTVEFHWYSAEEAGLLGSQAIFSEYSKTGRDVKAMLQQDMTGYVEGTLRAGEVESVGVITDFVDPGLTEFIKLVIKGYCDIPFVLTKCGYACSDHASASRYGYPSAFVIESEFKRSNQKIHTTSDTIELLSFDHMLQHAKMTLGLAYELAFAEL.

Positions 1–19 are cleaved as a signal peptide; that stretch reads MKHLSLLALAAVAPTTALA. Residues 20-95 constitute a propeptide that is removed on maturation; the sequence is GVIDHQQVTF…SVKSFEQTKV (76 aa). Asn-187 is a glycosylation site (N-linked (GlcNAc...) asparagine). Residues His-195, Asp-214, Glu-253, and Asp-280 each contribute to the Zn(2+) site. A disulfide bridge connects residues Cys-329 and Cys-333. His-362 is a binding site for Zn(2+).

This sequence belongs to the peptidase M28 family. M28E subfamily. In terms of assembly, monomer. Zn(2+) is required as a cofactor.

It is found in the secreted. Extracellular aminopeptidase that allows assimilation of proteinaceous substrates. This Uncinocarpus reesii (strain UAMH 1704) protein is Leucine aminopeptidase 1 (LAP1).